Consider the following 502-residue polypeptide: Cardiolipin synthase (502 aa).

Transmembrane regions (helical) follow at residues 7–27 (VAILIVIVGVLLTLTHDYWGG), 29–49 (LLGIFSVLISCSVVFIAFVIS), and 59–79 (IAWLAVLGSFPFLGFLFYLLF). PLD phosphodiesterase domains are found at residues 237-264 (INFRNHRKIIVIDGGVGFVGGLNIGDEY) and 415-442 (EKGFLHSKVIVVDGELASIGTANMDMRS). Residues histidine 242, lysine 244, aspartate 249, histidine 420, lysine 422, and aspartate 427 contribute to the active site.

The protein belongs to the phospholipase D family. Cardiolipin synthase subfamily.

Its subcellular location is the cell membrane. The catalysed reaction is 2 a 1,2-diacyl-sn-glycero-3-phospho-(1'-sn-glycerol) = a cardiolipin + glycerol. Functionally, catalyzes the reversible phosphatidyl group transfer from one phosphatidylglycerol molecule to another to form cardiolipin (CL) (diphosphatidylglycerol) and glycerol. The polypeptide is Cardiolipin synthase (cls) (Geobacillus thermodenitrificans (strain NG80-2)).